A 252-amino-acid chain; its full sequence is Transmembrane ascorbate-dependent reductase CYB561 (252 aa).

M1 bears the N-acetylmethionine mark. Residues 1-17 are Cytoplasmic-facing; sequence MEGPASPARAPGALPYY. The chain crosses the membrane as a helical span at residues 18-38; it reads VAFSQLLGLIVVAMTGAWLGM. The Cytochrome b561 domain maps to 20-221; sequence FSQLLGLIVV…FATVILYILT (202 aa). At 39 to 52 the chain is on the vesicular side; it reads YRGGIAWESALQFN. The chain crosses the membrane as a helical span at residues 53-73; that stretch reads VHPLCMIIGLVFLQGDALLVY. Residues H54, R74, and K81 each coordinate heme b. The Cytoplasmic portion of the chain corresponds to 74 to 86; sequence RVFRNEAKRTTKV. L-ascorbate is bound by residues K81 and K85. A helical membrane pass occupies residues 87-107; it reads LHGLLHVFAFVIALVGLVAVF. Heme b contacts are provided by residues H88, 117–120, and H122; that span reads DLYS. At 108 to 125 the chain is on the vesicular side; that stretch reads EHHRKKGYADLYSLHSWC. Residues 126 to 146 form a helical membrane-spanning segment; the sequence is GILVFALFFAQWLVGFSFFLF. The Cytoplasmic segment spans residues 147-159; sequence PGASFSLRSRYRP. Residue R154 coordinates L-ascorbate. A helical membrane pass occupies residues 160 to 180; it reads QHVFFGAAIFLLSVATALLGL. H161 and E182 together coordinate heme b. Over 181–199 the chain is Vesicular; that stretch reads KEALLFELGTKYSMFEPEG. The chain crosses the membrane as a helical span at residues 200–220; sequence VLANVLGLLLATFATVILYIL. Over 221–252 the chain is Cytoplasmic; that stretch reads TRADWKRPLQAEEQALSMDFKTLTEGDSPSSQ. Heme b is bound at residue K226. 2 positions are modified to phosphoserine: S248 and S250.

Heme b is required as a cofactor. As to expression, expressed in the adrenal medulla and all brain regions, but not in visceral organs.

Its subcellular location is the cytoplasmic vesicle. The protein resides in the secretory vesicle. It localises to the chromaffin granule membrane. The enzyme catalyses monodehydro-L-ascorbate radical(out) + L-ascorbate(in) = monodehydro-L-ascorbate radical(in) + L-ascorbate(out). Transmembrane reductase that uses ascorbate as an electron donor in the cytoplasm and transfers electrons across membranes to reduce monodehydro-L-ascorbate radical in the lumen of secretory vesicles. It is therefore involved the regeneration and homeostasis within secretory vesicles of ascorbate which in turn provides reducing equivalents needed to support the activity of intravesicular enzymes. In Bos taurus (Bovine), this protein is Transmembrane ascorbate-dependent reductase CYB561 (CYB561).